We begin with the raw amino-acid sequence, 336 residues long: Phosphoribosylformylglycinamidine cyclo-ligase (336 aa).

This sequence belongs to the AIR synthase family.

It localises to the cytoplasm. It carries out the reaction 2-formamido-N(1)-(5-O-phospho-beta-D-ribosyl)acetamidine + ATP = 5-amino-1-(5-phospho-beta-D-ribosyl)imidazole + ADP + phosphate + H(+). Its pathway is purine metabolism; IMP biosynthesis via de novo pathway; 5-amino-1-(5-phospho-D-ribosyl)imidazole from N(2)-formyl-N(1)-(5-phospho-D-ribosyl)glycinamide: step 2/2. The protein is Phosphoribosylformylglycinamidine cyclo-ligase of Thermoanaerobacter pseudethanolicus (strain ATCC 33223 / 39E) (Clostridium thermohydrosulfuricum).